Consider the following 271-residue polypeptide: Tryptophan synthase alpha chain (271 aa).

Catalysis depends on proton acceptor residues glutamate 49 and aspartate 60.

The protein belongs to the TrpA family. As to quaternary structure, tetramer of two alpha and two beta chains.

The catalysed reaction is (1S,2R)-1-C-(indol-3-yl)glycerol 3-phosphate + L-serine = D-glyceraldehyde 3-phosphate + L-tryptophan + H2O. It functions in the pathway amino-acid biosynthesis; L-tryptophan biosynthesis; L-tryptophan from chorismate: step 5/5. Functionally, the alpha subunit is responsible for the aldol cleavage of indoleglycerol phosphate to indole and glyceraldehyde 3-phosphate. This Nitrosococcus oceani (strain ATCC 19707 / BCRC 17464 / JCM 30415 / NCIMB 11848 / C-107) protein is Tryptophan synthase alpha chain.